An 87-amino-acid polypeptide reads, in one-letter code: uncharacterized protein (87 aa).

The helical transmembrane segment at 44–64 (DALYLAGSTIFTIVTTLVAWF) threads the bilayer.

Belongs to the SPP1 holin family.

The protein resides in the membrane. This is an uncharacterized protein from Bacillus licheniformis.